Here is a 231-residue protein sequence, read N- to C-terminus: ABC transporter ATP-binding protein YtrE (231 aa).

Positions 4–231 (VQHIDHSFTI…VLKGGITVEV (228 aa)) constitute an ABC transporter domain. 42–49 (GRSGSGKS) lines the ATP pocket.

Belongs to the ABC transporter superfamily. As to quaternary structure, the complex is composed of 2 ATP-binding proteins (YtrB and YtrE), 2 transmembrane proteins (YtrC and YtrD) and a solute-binding protein (YtrF).

The protein resides in the cell membrane. Part of the ABC transporter complex YtrBCDEF that plays a role in acetoin utilization during stationary phase and sporulation. In Bacillus subtilis (strain 168), this protein is ABC transporter ATP-binding protein YtrE (ytrE).